A 610-amino-acid chain; its full sequence is Elongation factor 4 (610 aa).

The 185-residue stretch at 14-198 (ANIRNFSIVA…AIVTRLPPPQ (185 aa)) folds into the tr-type G domain. Residues 26–31 (DHGKST) and 145–148 (NKVD) contribute to the GTP site.

It belongs to the TRAFAC class translation factor GTPase superfamily. Classic translation factor GTPase family. LepA subfamily.

The protein resides in the cell inner membrane. The enzyme catalyses GTP + H2O = GDP + phosphate + H(+). Required for accurate and efficient protein synthesis under certain stress conditions. May act as a fidelity factor of the translation reaction, by catalyzing a one-codon backward translocation of tRNAs on improperly translocated ribosomes. Back-translocation proceeds from a post-translocation (POST) complex to a pre-translocation (PRE) complex, thus giving elongation factor G a second chance to translocate the tRNAs correctly. Binds to ribosomes in a GTP-dependent manner. The protein is Elongation factor 4 of Nitrobacter hamburgensis (strain DSM 10229 / NCIMB 13809 / X14).